The following is a 302-amino-acid chain: uncharacterized protein (302 aa).

9 helical membrane passes run Met1–Ile21, Ser33–Tyr53, Phe67–Phe87, Phe101–Ile121, Phe124–Tyr144, Tyr185–Ile205, Ile220–Ala240, Leu253–Pro273, and Ala274–Ile294.

It belongs to the TerC family.

The protein localises to the cell membrane. This is an uncharacterized protein from Rickettsia bellii (strain RML369-C).